The chain runs to 40 residues: U12-ctenitoxin-Co1a (40 aa).

Disulfide bonds link Cys2–Cys16, Cys9–Cys22, Cys15–Cys31, and Cys24–Cys29.

As to expression, expressed by the venom gland.

The protein localises to the secreted. Its function is as follows. Insecticidal neurotoxin that reversibly inhibits the N-methyl-D-aspartate (NMDA)-subtype of ionotropic glutamate receptor (GRIN) and inhibits inactivation of insect sodium channels (Nav). In vivo, is highly toxic to insects. In Ctenus ornatus (Brazilian spider), this protein is U12-ctenitoxin-Co1a.